Reading from the N-terminus, the 168-residue chain is Nicotinamide-nucleotide adenylyltransferase (168 aa).

Belongs to the archaeal NMN adenylyltransferase family.

The protein localises to the cytoplasm. It catalyses the reaction beta-nicotinamide D-ribonucleotide + ATP + H(+) = diphosphate + NAD(+). It participates in cofactor biosynthesis; NAD(+) biosynthesis; NAD(+) from nicotinamide D-ribonucleotide: step 1/1. The protein is Nicotinamide-nucleotide adenylyltransferase of Methanoculleus marisnigri (strain ATCC 35101 / DSM 1498 / JR1).